Consider the following 369-residue polypeptide: Bi-functional coumaroyl CoA and feruloyl CoA ortho-hydroxylase Diox2 (369 aa).

The 104-residue stretch at 215 to 318 (GSRRVNLNYY…RISVPLFVNP (104 aa)) folds into the Fe2OG dioxygenase domain. Tyrosine 224 lines the 2-oxoglutarate pocket. 3 residues coordinate Fe cation: histidine 239, aspartate 241, and histidine 299. Residues arginine 309 and serine 311 each contribute to the 2-oxoglutarate site.

Belongs to the iron/ascorbate-dependent oxidoreductase family. L-ascorbate serves as cofactor. The cofactor is Fe(2+).

The enzyme catalyses (E)-4-coumaroyl-CoA + 2-oxoglutarate + O2 = (E)-2,4-dihydroxycinnamoyl-CoA + succinate + CO2. It catalyses the reaction (E)-feruloyl-CoA + 2-oxoglutarate + O2 = (E)-6-hydroxyferuloyl-CoA + succinate + CO2. It participates in phenylpropanoid metabolism. Its function is as follows. 2-oxoglutarate (OG)- and Fe(II)-dependent dioxygenase (2OGD) involved in scopoletin and umbelliferone biosynthesis. Converts feruloyl CoA into 6'-hydroxyferuloyl CoA, and p-coumaroyl CoA into 2,4-dihydroxycinnamoyl-CoA. The chain is Bi-functional coumaroyl CoA and feruloyl CoA ortho-hydroxylase Diox2 from Ruta graveolens (Common rue).